We begin with the raw amino-acid sequence, 165 residues long: Cytochrome c-550-like protein (165 aa).

The N-terminal stretch at 1–38 (MPHLDQKLPMRWRIPSRLWAWVGILALLWLGLASPVAA) is a signal peptide. Heme c contacts are provided by Cys83, Cys86, His87, and Cys137.

Belongs to the cytochrome c family. PsbV subfamily. It depends on heme c as a cofactor.

It is found in the cellular thylakoid membrane. Functionally, possible low-potential cytochrome c. The chain is Cytochrome c-550-like protein (psbV2) from Synechococcus sp. (strain JA-2-3B'a(2-13)) (Cyanobacteria bacterium Yellowstone B-Prime).